The primary structure comprises 490 residues: Beta-N-acetyl-D-glucosaminide beta-1,4-N-acetylglucosaminyl-transferase (490 aa).

The Cytoplasmic portion of the chain corresponds to 1 to 30 (MYLVVCWGRVTGNMISTRHCFSRCKSRSVR). Residues 31-50 (VIKATAMLFVAAMLFLALHM) form a helical; Signal-anchor for type II membrane protein membrane-spanning segment. Residues Asn-51, Asn-82, Asn-441, Asn-459, and Asn-485 are each glycosylated (N-linked (GlcNAc...) asparagine). At 51 to 490 (NFSHEASQQN…YLTGNFTIIS (440 aa)) the chain is on the lumenal side.

Belongs to the glycosyltransferase 7 family.

It is found in the golgi apparatus membrane. It carries out the reaction an N-acetyl-beta-D-glucosaminyl derivative + UDP-N-acetyl-alpha-D-glucosamine = an N-acetyl-beta-D-glucosaminyl-(1-&gt;4)-N-acetyl-beta-D-glucosaminyl derivative + UDP + H(+). Its pathway is protein modification; protein glycosylation. This chain is Beta-N-acetyl-D-glucosaminide beta-1,4-N-acetylglucosaminyl-transferase (GNT), found in Lymnaea stagnalis (Great pond snail).